A 1057-amino-acid chain; its full sequence is Hemophilin receptor (1057 aa).

The TBDR plug domain maps to 168–285 (KVYDANRSSV…VGGAVVVKTL (118 aa)). Residues 296-1057 (SFGAELKVEG…TMKISWTTKF (762 aa)) form the TBDR beta-barrel domain.

Belongs to the TonB-dependent receptor family.

The protein localises to the cell outer membrane. In terms of biological role, part of a high affinity heme acquisition system. Functions as a gateway for heme entry into the bacterial cell, enabling growth on hemoprotein sources. Can acquire heme directly from hemoprotein reservoirs, however, HphA likely enhances the efficiency of this process by delivering heme to HphR. Is essential for virulence, bacterial dissemination and growth in the blood. This Acinetobacter baumannii protein is Hemophilin receptor.